The primary structure comprises 96 residues: Large ribosomal subunit protein bL28 (96 aa).

A disordered region spans residues 1 to 24 (MSRSCELTGKGVQSGHNVSHANNK).

This sequence belongs to the bacterial ribosomal protein bL28 family.

The chain is Large ribosomal subunit protein bL28 from Sinorhizobium fredii (strain NBRC 101917 / NGR234).